Reading from the N-terminus, the 361-residue chain is dTDP-glucose 4,6-dehydratase (361 aa).

NAD(+) is bound by residues phenylalanine 11–isoleucine 12, aspartate 32–threonine 35, aspartate 58–isoleucine 59, leucine 80–serine 84, and threonine 99. A substrate-binding site is contributed by serine 84. A substrate-binding site is contributed by threonine 133. Aspartate 134 functions as the Proton donor in the catalytic mechanism. Active-site proton acceptor residues include glutamate 135 and tyrosine 167. Tyrosine 167–lysine 171 serves as a coordination point for NAD(+). Asparagine 196 provides a ligand contact to substrate. Residue asparagine 197 participates in NAD(+) binding. Residues lysine 206–leucine 207, proline 222–tyrosine 224, arginine 231, asparagine 266, aspartate 296–histidine 300, and tyrosine 357 each bind substrate.

It belongs to the NAD(P)-dependent epimerase/dehydratase family. dTDP-glucose dehydratase subfamily. Homodimer. It depends on NAD(+) as a cofactor.

The catalysed reaction is dTDP-alpha-D-glucose = dTDP-4-dehydro-6-deoxy-alpha-D-glucose + H2O. It functions in the pathway carbohydrate biosynthesis; dTDP-L-rhamnose biosynthesis. The protein operates within bacterial outer membrane biogenesis; LPS O-antigen biosynthesis. In terms of biological role, catalyzes the dehydration of dTDP-D-glucose to form dTDP-6-deoxy-D-xylo-4-hexulose via a three-step process involving oxidation, dehydration and reduction. The protein is dTDP-glucose 4,6-dehydratase of Salmonella typhimurium (strain LT2 / SGSC1412 / ATCC 700720).